Reading from the N-terminus, the 93-residue chain is Parbolysin P1 (93 aa).

Intrachain disulfides connect Cys-16–Cys-37, Cys-22–Cys-33, and Cys-47–Cys-60.

Belongs to the worm cytolysin family. As to expression, localized within the skin and proboscis and are most readily isolated from body mucus secretions.

It is found in the secreted. Functionally, cytolysin that shows hemolytic activity (on bovine erythrocytes, HC(50)=5.75 mg/ml). This hemolytic activity is completely inhibited by small unilamelar vesicles composed of PC/PG, PC/PI and PC/PS in 1:1 molar ratios (with at least 100 mg/ml concentration). The recombinant protein does not show hemolytic activity, suggesting that it is not properly folded or that it requires a free N-terminal end for its activity. The chain is Parbolysin P1 from Parborlasia corrugatus (Antarctic nemertean worm).